Reading from the N-terminus, the 654-residue chain is MAKERIVLPSAEFKKNSNITLKDYKSLYKESIENPNKFWAKEANRLTWFKKWTKVLNHDFKNAKVEWFKGGKLNVSYNCLDRHISTPLKNKAALIWEGDNPSESKVLTYYDVYREVNRFANVLKKYGVKKGDRVLVYLPMIPELAITILACTRIGAIHSVVFGGFSPEALQSRIDDCKPKLIVTADGGFRGGKPIELKRNVDIALEKSKEDVKTVIVVRRTGNESGLVWKDGRDYWYHFLISDPDLSPYCKPESMDAEDPLFILYTSGSTGKPKGVLHTTGGYLLGVNLTFHYVFDIKPEDTYWCTADIGWVTGHSYLVYGPLSNGASSVMFEGVPSYPDAGRFWDVIDKYGVNIFYTAPTAIRALMREGLTHVQKRNLSSLRLLGSVGEPINPEAWEWYFKIIGKEKCPIVDTWWQTETGSIMITALPGAIPQKPGSATLPFFGVQPVLVDNDGKEINDKGEVSGNLCIKSPWPSMMRGVYGDSKRFFDTYFSQFKGYYFTGDGARRDKDGYYWITGRVDDVINVSGHRIGSAEVESALVENRSVAEAAVVGFPHDIKGQGIYAYVTVKEGIATNDTLKKELVAIVEKVIGKIARPDVIHWAPSLPKTRSGKIMRRILRKIASGEFEGLGDTSTLADPSVVQKLIEDKRKFHS.

CoA is bound by residues 190-193 (RGGK) and threonine 313. Residues 389–391 (GEP), 413–418 (DTWWQT), aspartate 504, and arginine 519 contribute to the ATP site. Position 527 (serine 527) interacts with CoA. Arginine 530 lines the ATP pocket. Positions 541 and 546 each coordinate Mg(2+). Lysine 613 carries the post-translational modification N6-acetyllysine.

The protein belongs to the ATP-dependent AMP-binding enzyme family. Mg(2+) is required as a cofactor. In terms of processing, acetylated. Deacetylation by the SIR2-homolog deacetylase activates the enzyme.

The catalysed reaction is acetate + ATP + CoA = acetyl-CoA + AMP + diphosphate. In terms of biological role, catalyzes the conversion of acetate into acetyl-CoA (AcCoA), an essential intermediate at the junction of anabolic and catabolic pathways. AcsA undergoes a two-step reaction. In the first half reaction, AcsA combines acetate with ATP to form acetyl-adenylate (AcAMP) intermediate. In the second half reaction, it can then transfer the acetyl group from AcAMP to the sulfhydryl group of CoA, forming the product AcCoA. The polypeptide is Acetyl-coenzyme A synthetase (Leptospira borgpetersenii serovar Hardjo-bovis (strain L550)).